Consider the following 337-residue polypeptide: m7GpppX diphosphatase (337 aa).

The disordered stretch occupies residues 1 to 35 (MADAAPQLGKRKRELDVEEAHAASTEEKEAGVGNG). Ala2 is modified (N-acetylalanine). The nuclear localization signal (NLS) signature appears at 10-13 (KRKR). The segment covering 13–30 (RELDVEEAHAASTEEKEA) has biased composition (basic and acidic residues). Ser24 and Ser101 each carry phosphoserine. Lys138 and Lys142 each carry N6-acetyllysine. The nuclear export sequence (NES) signature appears at 142–154 (KYLRQDLRLIRET). Residues Trp175, Glu185, Asp205, Lys207, and 268-279 (HYLPSYYHLHVH) each bind substrate. Residues 275–279 (HLHVH) carry the Histidine triad motif motif. His277 (nucleophile) is an active-site residue.

It belongs to the HIT family. As to quaternary structure, homodimer. Associates with components of the exosome multienzyme ribonuclease complex, such as EXOSC3 and EXOSC4. Interacts with NDOR1. In terms of tissue distribution, detected in liver, brain, kidney, testis and prostate.

Its subcellular location is the cytoplasm. The protein resides in the nucleus. It catalyses the reaction a 5'-end (N(7)-methyl 5'-triphosphoguanosine)-ribonucleoside in mRNA + H2O = N(7)-methyl-GMP + a 5'-end diphospho-ribonucleoside in mRNA + 2 H(+). Its activity is regulated as follows. The hydrolytic product 7-methylguanosine diphosphate (m7GDP) efficiently inhibits the decapping scavenger activity and acts as a competitive inhibitor in vitro. Inhibited by 2,4-diaminoquinazoline. Decapping scavenger enzyme that catalyzes the cleavage of a residual cap structure following the degradation of mRNAs by the 3'-&gt;5' exosome-mediated mRNA decay pathway. Hydrolyzes cap analog structures like 7-methylguanosine nucleoside triphosphate (m7GpppG) with up to 10 nucleotide substrates (small capped oligoribonucleotides) and specifically releases 5'-phosphorylated RNA fragments and 7-methylguanosine monophosphate (m7GMP). Cleaves cap analog structures like tri-methyl guanosine nucleoside triphosphate (m3(2,2,7)GpppG) with very poor efficiency. Does not hydrolyze unmethylated cap analog (GpppG) and shows no decapping activity on intact m7GpppG-capped mRNA molecules longer than 25 nucleotides. Does not hydrolyze 7-methylguanosine diphosphate (m7GDP) to m7GMP. May also play a role in the 5'-&gt;3 mRNA decay pathway; m7GDP, the downstream product released by the 5'-&gt;3' mRNA mediated decapping activity, may be also converted by DCPS to m7GMP. Binds to m7GpppG and strongly to m7GDP. Plays a role in first intron splicing of pre-mRNAs. Inhibits activation-induced cell death. The sequence is that of m7GpppX diphosphatase (DCPS) from Homo sapiens (Human).